Here is a 162-residue protein sequence, read N- to C-terminus: UPF0114 protein Shewmr4_0646 (162 aa).

The next 4 membrane-spanning stretches (helical) occupy residues 15–35, 53–73, 108–128, and 136–156; these read IMAPIYLGLSLVLLGLGIKFF, LVLVTLSLIDITLVGGLIVMV, KVAASIVAISSIHLLKIFMDV, and IMWYLLIHITFVVSAFAMGYL.

The protein belongs to the UPF0114 family.

It localises to the cell membrane. The protein is UPF0114 protein Shewmr4_0646 of Shewanella sp. (strain MR-4).